A 326-amino-acid chain; its full sequence is MGLEKKSALLEDLIEKCGGCAVVDGGFATQLEIHGAAINDPLWSAVSLIKDPELIKRVHMEYLEAGADVVVTSSYQATIPGFLSRGLSMEESESLLQKSVKLAVEARDRFWDKVSKTSGHSYNRALVAASIGSYGAYLADGSEYSGSYGEDVSLDKLKDFHRRRIQVLVEASPDLLAFETIPNKLEAQACVELLEEENVQIPAWICFTSVDGENAPSGESFQECLETLNKSNNICAVGINCAPPQFMDNLIRKFSKLTQKAIVVYPNSGEVWDGKAKKWLPSQCFGDAEFEMFATKWRDLGAKLIGGCCRTTPSTIKAISRDLKRR.

Residues 9–323 (LLEDLIEKCG…STIKAISRDL (315 aa)) form the Hcy-binding domain. Residues cysteine 241, cysteine 308, and cysteine 309 each coordinate Zn(2+).

Zn(2+) serves as cofactor. In terms of tissue distribution, expressed in roots, young leaves, florets and flowers. Not detected in old leaves.

The catalysed reaction is S-methyl-L-methionine + L-homocysteine = 2 L-methionine + H(+). Its activity is regulated as follows. Inhibited by L-methionine. Its function is as follows. Catalyzes methyl transfer from S-methylmethionine to homocysteine. The highest preference is for DL-homocysteine &gt;&gt; DL-cysteine. Has no selenocysteine methyltransferase activity. The protein is Homocysteine S-methyltransferase 1 (HMT1) of Brassica oleracea var. italica (Broccoli).